The chain runs to 276 residues: NH(3)-dependent NAD(+) synthetase (276 aa).

An ATP-binding site is contributed by 43 to 50 (GISGGVDS). D49 lines the Mg(2+) pocket. R146 is a deamido-NAD(+) binding site. An ATP-binding site is contributed by T166. Residue E171 participates in Mg(2+) binding. Positions 179 and 186 each coordinate deamido-NAD(+). ATP contacts are provided by K195 and T217. Residue 266-267 (HK) coordinates deamido-NAD(+).

This sequence belongs to the NAD synthetase family. In terms of assembly, homodimer.

The enzyme catalyses deamido-NAD(+) + NH4(+) + ATP = AMP + diphosphate + NAD(+) + H(+). The protein operates within cofactor biosynthesis; NAD(+) biosynthesis; NAD(+) from deamido-NAD(+) (ammonia route): step 1/1. In terms of biological role, catalyzes the ATP-dependent amidation of deamido-NAD to form NAD. Uses ammonia as a nitrogen source. This is NH(3)-dependent NAD(+) synthetase from Shewanella halifaxensis (strain HAW-EB4).